Reading from the N-terminus, the 447-residue chain is Argininosuccinate synthase (447 aa).

Residues 17–25 and Ala43 contribute to the ATP site; that span reads AFSGGLDTS. Tyr99 is an L-citrulline binding site. Residues Gly129 and Thr131 each coordinate ATP. L-aspartate contacts are provided by Thr131, Asn135, and Asp136. An L-citrulline-binding site is contributed by Asn135. ATP is bound at residue Asp136. The L-citrulline site is built by Arg139 and Ser192. Residue Asp194 participates in ATP binding. The L-citrulline site is built by Thr201, Glu203, and Glu280.

The protein belongs to the argininosuccinate synthase family. Type 2 subfamily. Homotetramer.

It is found in the cytoplasm. The enzyme catalyses L-citrulline + L-aspartate + ATP = 2-(N(omega)-L-arginino)succinate + AMP + diphosphate + H(+). It functions in the pathway amino-acid biosynthesis; L-arginine biosynthesis; L-arginine from L-ornithine and carbamoyl phosphate: step 2/3. This chain is Argininosuccinate synthase, found in Escherichia coli O139:H28 (strain E24377A / ETEC).